The primary structure comprises 336 residues: DNA-directed RNA polymerase subunit alpha (336 aa).

The alpha N-terminal domain (alpha-NTD) stretch occupies residues 1-226; the sequence is MLIAQRPTLS…ELFGLARELN (226 aa). Residues 243 to 336 are alpha C-terminal domain (alpha-CTD); the sequence is LAADMALPIE…SDDAFGDDEL (94 aa).

This sequence belongs to the RNA polymerase alpha chain family. In terms of assembly, homodimer. The RNAP catalytic core consists of 2 alpha, 1 beta, 1 beta' and 1 omega subunit. When a sigma factor is associated with the core the holoenzyme is formed, which can initiate transcription.

The catalysed reaction is RNA(n) + a ribonucleoside 5'-triphosphate = RNA(n+1) + diphosphate. In terms of biological role, DNA-dependent RNA polymerase catalyzes the transcription of DNA into RNA using the four ribonucleoside triphosphates as substrates. The sequence is that of DNA-directed RNA polymerase subunit alpha from Renibacterium salmoninarum (strain ATCC 33209 / DSM 20767 / JCM 11484 / NBRC 15589 / NCIMB 2235).